Consider the following 108-residue polypeptide: uncharacterized protein (108 aa).

Low complexity predominate over residues 48–73 (NSNIPSSSSSSPSFASFFSSTSTSAT). A disordered region spans residues 48–81 (NSNIPSSSSSSPSFASFFSSTSTSATLNGSSNNK).

This is an uncharacterized protein from Dictyostelium discoideum (Social amoeba).